A 287-amino-acid chain; its full sequence is Large ribosomal subunit protein uL2 (287 aa).

A disordered region spans residues 221-287 (RGSVMNPCDH…SKRSRGGRDS (67 aa)). The span at 258–287 (KTRKKNKPSNKLVVRRRRRISKRSRGGRDS) shows a compositional bias: basic residues.

The protein belongs to the universal ribosomal protein uL2 family. Part of the 50S ribosomal subunit. Forms a bridge to the 30S subunit in the 70S ribosome.

In terms of biological role, one of the primary rRNA binding proteins. Required for association of the 30S and 50S subunits to form the 70S ribosome, for tRNA binding and peptide bond formation. It has been suggested to have peptidyltransferase activity; this is somewhat controversial. Makes several contacts with the 16S rRNA in the 70S ribosome. This chain is Large ribosomal subunit protein uL2, found in Prochlorococcus marinus (strain MIT 9215).